The following is a 141-amino-acid chain: Small ribosomal subunit protein uS12 (141 aa).

It belongs to the universal ribosomal protein uS12 family. Part of the 30S ribosomal subunit.

With S4 and S5 plays an important role in translational accuracy. Located at the interface of the 30S and 50S subunits. This chain is Small ribosomal subunit protein uS12, found in Methanosphaera stadtmanae (strain ATCC 43021 / DSM 3091 / JCM 11832 / MCB-3).